We begin with the raw amino-acid sequence, 155 residues long: Regulatory protein RecX (155 aa).

This sequence belongs to the RecX family.

It localises to the cytoplasm. Its function is as follows. Modulates RecA activity. The sequence is that of Regulatory protein RecX from Pseudomonas fluorescens (strain ATCC BAA-477 / NRRL B-23932 / Pf-5).